A 386-amino-acid polypeptide reads, in one-letter code: NifS-like protein (386 aa).

Pyridoxal 5'-phosphate is bound by residues 58–59 (SE) and 184–186 (SIN).

The protein belongs to the class-V pyridoxal-phosphate-dependent aminotransferase family. NifS/IscS subfamily. Pyridoxal 5'-phosphate serves as cofactor.

It is found in the virion. This is NifS-like protein from Ornithodoros (relapsing fever ticks).